We begin with the raw amino-acid sequence, 340 residues long: Quinic acid degradation cluster protein x (340 aa).

5 residues coordinate Mg(2+): glutamate 90, aspartate 115, leucine 117, aspartate 118, and aspartate 262. Position 90 (glutamate 90) interacts with substrate. Residues 117 to 120 (LDGT) and aspartate 262 contribute to the substrate site.

This sequence belongs to the inositol monophosphatase superfamily.

In terms of biological role, part of the qa gene cluster that mediates the catabolism of quinic acid (QA) and as such, allows the use of QA as a sole carbon source. Its function within the pathway has not been determined yet but it probably plays a regulatory role. The qa cluster encodes 3 inducible enymes (qa-2, qa-3 and qa-4) catalyzing the first three reactions in the catabolism of quinic acid to protocatechuic acid (also known as 3,4-Dihydroxybenzoic acid). The chain is Quinic acid degradation cluster protein x from Neurospora crassa (strain ATCC 24698 / 74-OR23-1A / CBS 708.71 / DSM 1257 / FGSC 987).